The sequence spans 285 residues: Mitochondrial substrate carrier family protein S (285 aa).

Residues 1–9 lie on the Mitochondrial intermembrane side of the membrane; the sequence is MSTERGLKD. 3 Solcar repeats span residues 4–87, 96–183, and 197–283; these read ERGL…MKVL, LTVG…CKRY, and LNLP…VIKL. Residues 10–30 traverse the membrane as a helical segment; the sequence is SIAGTVAGAACLFTGHPFDTI. At 31–61 the chain is on the mitochondrial matrix side; it reads RVRLQTSNTPIGIMECFRNTIKYEGFSGLYK. Residues 62 to 82 traverse the membrane as a helical segment; it reads GVTSPLFGMMFETAVLFAGYG. Over 83 to 101 the chain is Mitochondrial intermembrane; the sequence is QMKVLLQKDENTPLTVGQC. The chain crosses the membrane as a helical span at residues 102 to 122; that stretch reads AIAGGFAGVGASVVLTPVELV. Residues 123–150 are Mitochondrial matrix-facing; the sequence is KCRLQVQTTGPQKYKGSLDCLVQILKEG. A helical transmembrane segment spans residues 151 to 172; sequence GIRGAYRGFTPTIAREFVGNMA. Over 173–199 the chain is Mitochondrial intermembrane; that stretch reads FFSTYETCKRYFKNKENKPNDDDELNL. The helical transmembrane segment at 200–220 threads the bilayer; sequence PALIISGGLGGMAYWTVLYPV. Topologically, residues 221–258 are mitochondrial matrix; sequence DVAKSKIQISEGAGPSPSIVKVLKEIYSKEGVKGLFRG. Residues 259–277 traverse the membrane as a helical segment; it reads YTPTIIRSFPANAAMFSVY. The Mitochondrial intermembrane portion of the chain corresponds to 278–285; the sequence is ELVIKLLG.

Belongs to the mitochondrial carrier (TC 2.A.29) family.

It localises to the mitochondrion inner membrane. In terms of biological role, mitochondrial solute carriers shuttle metabolites, nucleotides, and cofactors through the mitochondrial inner membrane. Mediates the transport of acylcarnitines of different length across the mitochondrial inner membrane from the cytosol to the mitochondrial matrix for their oxidation by the mitochondrial fatty acid-oxidation pathway. The polypeptide is Mitochondrial substrate carrier family protein S (mcfS) (Dictyostelium discoideum (Social amoeba)).